The primary structure comprises 322 residues: Ribonucleoside-diphosphate reductase small subunit (322 aa).

Residues Asp-70, Glu-101, and His-104 each coordinate Fe cation. Tyr-108 is a catalytic residue. Residues Glu-163, Glu-197, and His-200 each coordinate Fe cation.

The protein belongs to the ribonucleoside diphosphate reductase small chain family. Heterodimer of a large and a small subunit. Requires Fe cation as cofactor.

It catalyses the reaction a 2'-deoxyribonucleoside 5'-diphosphate + [thioredoxin]-disulfide + H2O = a ribonucleoside 5'-diphosphate + [thioredoxin]-dithiol. Provides the precursors necessary for DNA synthesis. Catalyzes the biosynthesis of deoxyribonucleotides from the corresponding ribonucleotides. This Plasmodium falciparum (isolate FCR-3 / Gambia) protein is Ribonucleoside-diphosphate reductase small subunit (RNR2).